A 186-amino-acid chain; its full sequence is MAKAVYVAEEVRVPEGVEVSIDGLKVTVKGPKGELTRDFSHARNIVIRLDEDEEGKKVVVEAYFANRRVKALVGTIAAHIENMITGVTKGFRYKLKIVYSHFPVTVKVQGDKVVIENFLGEKAPRIAKIMPGVTVKVQKDDVIVEGIDIEAVGQTAANIEQATKVKDKDRRVFIDGIYIYEKGVAE.

Belongs to the universal ribosomal protein uL6 family. Part of the 50S ribosomal subunit.

Its function is as follows. This protein binds to the 23S rRNA, and is important in its secondary structure. It is located near the subunit interface in the base of the L7/L12 stalk, and near the tRNA binding site of the peptidyltransferase center. The polypeptide is Large ribosomal subunit protein uL6 (Hyperthermus butylicus (strain DSM 5456 / JCM 9403 / PLM1-5)).